We begin with the raw amino-acid sequence, 419 residues long: ATP-dependent RNA helicase RhlB (419 aa).

Residues 9 to 37 (QRFSDLALHRSVQQAIKEKGFEFCTPIQA) carry the Q motif motif. A Helicase ATP-binding domain is found at 40–217 (LPITLKGQDI…FEHMNDPQYV (178 aa)). 53–60 (AQTGTGKT) is a binding site for ATP. The DEAD box motif lies at 163–166 (DEAD). A Helicase C-terminal domain is found at 241–388 (KMALLMTLLE…VSQYDAKALI (148 aa)).

This sequence belongs to the DEAD box helicase family. RhlB subfamily. In terms of assembly, component of the RNA degradosome, which is a multiprotein complex involved in RNA processing and mRNA degradation.

The protein localises to the cytoplasm. It carries out the reaction ATP + H2O = ADP + phosphate + H(+). In terms of biological role, DEAD-box RNA helicase involved in RNA degradation. Has RNA-dependent ATPase activity and unwinds double-stranded RNA. In Histophilus somni (strain 129Pt) (Haemophilus somnus), this protein is ATP-dependent RNA helicase RhlB.